Here is a 72-residue protein sequence, read N- to C-terminus: Small ribosomal subunit protein bS18c (72 aa).

This sequence belongs to the bacterial ribosomal protein bS18 family. In terms of assembly, part of the 30S ribosomal subunit.

It localises to the plastid. The protein localises to the chloroplast. The chain is Small ribosomal subunit protein bS18c from Emiliania huxleyi (Coccolithophore).